A 277-amino-acid polypeptide reads, in one-letter code: S-formylglutathione hydrolase FrmB (277 aa).

Active-site charge relay system residues include S145, D221, and H254.

The protein belongs to the esterase D family.

It catalyses the reaction S-formylglutathione + H2O = formate + glutathione + H(+). Serine hydrolase involved in the detoxification of formaldehyde. Hydrolyzes S-formylglutathione to glutathione and formate. This Escherichia coli (strain SMS-3-5 / SECEC) protein is S-formylglutathione hydrolase FrmB (frmB).